The chain runs to 466 residues: Cysteine--tRNA ligase (466 aa).

A Zn(2+)-binding site is contributed by Cys28. A 'HIGH' region motif is present at residues 30-40 (PTVYNYIHIGN). The Zn(2+) site is built by Cys208, His233, and Glu237. A 'KMSKS' region motif is present at residues 265 to 269 (KMSKS). Lys268 is a binding site for ATP.

It belongs to the class-I aminoacyl-tRNA synthetase family. In terms of assembly, monomer. Requires Zn(2+) as cofactor.

The protein resides in the cytoplasm. The catalysed reaction is tRNA(Cys) + L-cysteine + ATP = L-cysteinyl-tRNA(Cys) + AMP + diphosphate. The polypeptide is Cysteine--tRNA ligase (Staphylococcus haemolyticus (strain JCSC1435)).